The following is a 544-amino-acid chain: Chaperonin GroEL (544 aa).

ATP contacts are provided by residues 30-33 (TLGP), K51, 87-91 (DGTTT), G415, 481-483 (DAL), and D497.

Belongs to the chaperonin (HSP60) family. In terms of assembly, forms a cylinder of 14 subunits composed of two heptameric rings stacked back-to-back. Interacts with the co-chaperonin GroES.

Its subcellular location is the cytoplasm. The catalysed reaction is ATP + H2O + a folded polypeptide = ADP + phosphate + an unfolded polypeptide.. Together with its co-chaperonin GroES, plays an essential role in assisting protein folding. The GroEL-GroES system forms a nano-cage that allows encapsulation of the non-native substrate proteins and provides a physical environment optimized to promote and accelerate protein folding. This Chlamydia trachomatis serovar A (strain ATCC VR-571B / DSM 19440 / HAR-13) protein is Chaperonin GroEL.